We begin with the raw amino-acid sequence, 890 residues long: Translation initiation factor IF-2 (890 aa).

The disordered stretch occupies residues 45 to 304 (LIDHLNQKNS…LQQGFQKPAQ (260 aa)). The segment covering 67-81 (STLNIPGTGGKSKSV) has biased composition (polar residues). Residues 92 to 217 (VKRDPQEAER…RMAEENKWTD (126 aa)) are compositionally biased toward basic and acidic residues. The span at 252-266 (GRGRNAKAARPKKGN) shows a compositional bias: basic residues. Positions 267-280 (KHSESKADREEARA) are enriched in basic and acidic residues. Positions 389-558 (PRAPVVTIMG…LLQAEVLELK (170 aa)) constitute a tr-type G domain. The interval 398–405 (GHVDHGKT) is G1. A GTP-binding site is contributed by 398 to 405 (GHVDHGKT). Positions 423-427 (GITQH) are G2. The interval 444 to 447 (DTPG) is G3. GTP contacts are provided by residues 444–448 (DTPGH) and 498–501 (NKID). Positions 498-501 (NKID) are G4. Positions 534 to 536 (SAK) are G5. Lys-808 is modified (N6-acetyllysine).

Belongs to the TRAFAC class translation factor GTPase superfamily. Classic translation factor GTPase family. IF-2 subfamily.

It is found in the cytoplasm. Functionally, one of the essential components for the initiation of protein synthesis. Protects formylmethionyl-tRNA from spontaneous hydrolysis and promotes its binding to the 30S ribosomal subunits. Also involved in the hydrolysis of GTP during the formation of the 70S ribosomal complex. The protein is Translation initiation factor IF-2 of Escherichia fergusonii (strain ATCC 35469 / DSM 13698 / CCUG 18766 / IAM 14443 / JCM 21226 / LMG 7866 / NBRC 102419 / NCTC 12128 / CDC 0568-73).